We begin with the raw amino-acid sequence, 121 residues long: Movement protein TGBp3 (121 aa).

Residues 1-40 form a disordered region; the sequence is MHYPTEADTSTGPNPSATSAPVRPRHVTPSLSPSSSSSPS. Residues 1–43 are Lumenal-facing; sequence MHYPTEADTSTGPNPSATSAPVRPRHVTPSLSPSSSSSPSPDS. Residues 7–19 are compositionally biased toward polar residues; the sequence is ADTSTGPNPSATS. Residues 29–40 show a composition bias toward low complexity; it reads PSLSPSSSSSPS. Residues 44-64 form a helical membrane-spanning segment; it reads FYYFLAAAVILTAALAAALLT. Topologically, residues 65-121 are cytoplasmic; the sequence is PNPGCTIVITGHTTIIQGSCPIPPQLVLAAHPRGLSLEQYLKFTNTLPDGSQHRSHR.

The protein belongs to the Tymovirales TGBp3 protein family.

It is found in the host endoplasmic reticulum membrane. In terms of biological role, plays a role in viral cell-to-cell propagation, by facilitating genome transport to neighboring plant cells through plasmosdesmata. May induce the formation of granular vesicles derived from the Endoplasmic reticulum, which align on actin filaments. The chain is Movement protein TGBp3 from Plantago asiatica (P1AMV).